The primary structure comprises 168 residues: Phosphopantetheine adenylyltransferase (168 aa).

Position 14 (T14) interacts with substrate. Residues 14–15 and H22 contribute to the ATP site; that span reads TF. Substrate-binding residues include K46, L78, and R92. Residues 93–95, E103, and 128–134 each bind ATP; these read GLR and YSFISSS.

This sequence belongs to the bacterial CoaD family. As to quaternary structure, homohexamer. Requires Mg(2+) as cofactor.

It is found in the cytoplasm. It carries out the reaction (R)-4'-phosphopantetheine + ATP + H(+) = 3'-dephospho-CoA + diphosphate. The protein operates within cofactor biosynthesis; coenzyme A biosynthesis; CoA from (R)-pantothenate: step 4/5. Its function is as follows. Reversibly transfers an adenylyl group from ATP to 4'-phosphopantetheine, yielding dephospho-CoA (dPCoA) and pyrophosphate. This is Phosphopantetheine adenylyltransferase from Xanthomonas campestris pv. campestris (strain B100).